We begin with the raw amino-acid sequence, 111 residues long: Large ribosomal subunit protein eL34B (111 aa).

Tyrosine 76 bears the Phosphotyrosine mark.

The protein belongs to the eukaryotic ribosomal protein eL34 family. Component of the large ribosomal subunit (LSU). Mature yeast ribosomes consist of a small (40S) and a large (60S) subunit. The 40S small subunit contains 1 molecule of ribosomal RNA (18S rRNA) and at least 33 different proteins. The large 60S subunit contains 3 rRNA molecules (25S, 5.8S and 5S rRNA) and at least 46 different proteins.

It localises to the cytoplasm. It is found in the nucleus. Its subcellular location is the nucleolus. Component of the ribosome, a large ribonucleoprotein complex responsible for the synthesis of proteins in the cell. The small ribosomal subunit (SSU) binds messenger RNAs (mRNAs) and translates the encoded message by selecting cognate aminoacyl-transfer RNA (tRNA) molecules. The large subunit (LSU) contains the ribosomal catalytic site termed the peptidyl transferase center (PTC), which catalyzes the formation of peptide bonds, thereby polymerizing the amino acids delivered by tRNAs into a polypeptide chain. The nascent polypeptides leave the ribosome through a tunnel in the LSU and interact with protein factors that function in enzymatic processing, targeting, and the membrane insertion of nascent chains at the exit of the ribosomal tunnel. The polypeptide is Large ribosomal subunit protein eL34B (rpl3402) (Schizosaccharomyces pombe (strain 972 / ATCC 24843) (Fission yeast)).